Consider the following 126-residue polypeptide: uncharacterized protein (126 aa).

This is an uncharacterized protein from Methanocaldococcus jannaschii (strain ATCC 43067 / DSM 2661 / JAL-1 / JCM 10045 / NBRC 100440) (Methanococcus jannaschii).